The chain runs to 185 residues: MISSNDFRPGVSIVLDGSVWRVLEFLHVKPGKGSAFVRTKLKNVQSGSVMEKTFRAGETVPQATLEKSTMQHTYKEGDEFVFMDMETYEEGRLTRTQIGDRVKYLKEGMEAEVIKWGDQVLGVELPKSVVLEIVQTDPGLKGDTATGGSKPATLETGAIVMVPLFISQGERIKVDTQEDKYISRE.

It belongs to the elongation factor P family.

It is found in the cytoplasm. It participates in protein biosynthesis; polypeptide chain elongation. In terms of biological role, involved in peptide bond synthesis. Stimulates efficient translation and peptide-bond synthesis on native or reconstituted 70S ribosomes in vitro. Probably functions indirectly by altering the affinity of the ribosome for aminoacyl-tRNA, thus increasing their reactivity as acceptors for peptidyl transferase. This Nostoc punctiforme (strain ATCC 29133 / PCC 73102) protein is Elongation factor P.